We begin with the raw amino-acid sequence, 476 residues long: Homeobox even-skipped homolog protein 2 (476 aa).

Disordered stretches follow at residues 82 to 113 and 142 to 185; these read TGSE…AEAD and KGYA…GSGA. 2 stretches are compositionally biased toward low complexity: residues 84–96 and 147–159; these read SEST…SSAA and SGSA…SASG. Over residues 160–183 the composition is skewed to gly residues; it reads SGLGSLHGGSGGSGGSAALGGSGS. The homeobox DNA-binding region spans 188–247; sequence VRRYRTAFTREQIARLEKEFYRENYVSRPRRCELAAALNLPETTIKVWFQNRRMKDKRQR.

This sequence belongs to the even-skipped homeobox family.

It localises to the nucleus. In Homo sapiens (Human), this protein is Homeobox even-skipped homolog protein 2 (EVX2).